We begin with the raw amino-acid sequence, 181 residues long: Oligoribonuclease (181 aa).

The Exonuclease domain maps to 8 to 171 (LIWIDLEMTG…QDIQESIAEL (164 aa)). Tyr129 is a catalytic residue.

Belongs to the oligoribonuclease family.

The protein localises to the cytoplasm. In terms of biological role, 3'-to-5' exoribonuclease specific for small oligoribonucleotides. The polypeptide is Oligoribonuclease (Shewanella oneidensis (strain ATCC 700550 / JCM 31522 / CIP 106686 / LMG 19005 / NCIMB 14063 / MR-1)).